The following is an 831-amino-acid chain: Protein translocase subunit SecA (831 aa).

ATP is bound by residues Gln88, 106 to 110 (GEGKT), and Asp495. Zn(2+) contacts are provided by Cys816, Cys818, Cys827, and Cys828.

The protein belongs to the SecA family. Monomer and homodimer. Part of the essential Sec protein translocation apparatus which comprises SecA, SecYEG and auxiliary proteins SecDF-YajC and YidC. Zn(2+) is required as a cofactor.

The protein localises to the cell membrane. The protein resides in the cytoplasm. It carries out the reaction ATP + H2O + cellular proteinSide 1 = ADP + phosphate + cellular proteinSide 2.. Its function is as follows. Part of the Sec protein translocase complex. Interacts with the SecYEG preprotein conducting channel. Has a central role in coupling the hydrolysis of ATP to the transfer of proteins into and across the cell membrane, serving as an ATP-driven molecular motor driving the stepwise translocation of polypeptide chains across the membrane. This chain is Protein translocase subunit SecA, found in Lawsonia intracellularis (strain PHE/MN1-00).